The sequence spans 201 residues: Large ribosomal subunit protein uL4 (201 aa).

Residues 44 to 73 form a disordered region; the sequence is RAQKSRAEVKASRKKPWRQKGTGRARAGSV. The span at 55–66 shows a compositional bias: basic residues; sequence SRKKPWRQKGTG.

The protein belongs to the universal ribosomal protein uL4 family. Part of the 50S ribosomal subunit.

In terms of biological role, one of the primary rRNA binding proteins, this protein initially binds near the 5'-end of the 23S rRNA. It is important during the early stages of 50S assembly. It makes multiple contacts with different domains of the 23S rRNA in the assembled 50S subunit and ribosome. Its function is as follows. Forms part of the polypeptide exit tunnel. The sequence is that of Large ribosomal subunit protein uL4 from Hamiltonella defensa subsp. Acyrthosiphon pisum (strain 5AT).